Consider the following 289-residue polypeptide: 3-methyl-2-oxobutanoate hydroxymethyltransferase (289 aa).

Aspartate 50 and aspartate 89 together coordinate Mg(2+). 3-methyl-2-oxobutanoate contacts are provided by residues 50 to 51 (DS), aspartate 89, and lysine 119. Glutamate 121 is a binding site for Mg(2+). Residue glutamate 188 is the Proton acceptor of the active site. A disordered region spans residues 266–289 (AQHSFGMPEDEQRRWEENVSGADD).

Belongs to the PanB family. As to quaternary structure, homodecamer; pentamer of dimers. Requires Mg(2+) as cofactor.

The protein localises to the cytoplasm. The catalysed reaction is 3-methyl-2-oxobutanoate + (6R)-5,10-methylene-5,6,7,8-tetrahydrofolate + H2O = 2-dehydropantoate + (6S)-5,6,7,8-tetrahydrofolate. The protein operates within cofactor biosynthesis; (R)-pantothenate biosynthesis; (R)-pantoate from 3-methyl-2-oxobutanoate: step 1/2. In terms of biological role, catalyzes the reversible reaction in which hydroxymethyl group from 5,10-methylenetetrahydrofolate is transferred onto alpha-ketoisovalerate to form ketopantoate. This Oleidesulfovibrio alaskensis (strain ATCC BAA-1058 / DSM 17464 / G20) (Desulfovibrio alaskensis) protein is 3-methyl-2-oxobutanoate hydroxymethyltransferase.